A 486-amino-acid chain; its full sequence is Glutamyl-tRNA(Gln) amidotransferase subunit A (486 aa).

Active-site charge relay system residues include Lys-75 and Ser-150. Ser-174 functions as the Acyl-ester intermediate in the catalytic mechanism.

This sequence belongs to the amidase family. GatA subfamily. As to quaternary structure, heterotrimer of A, B and C subunits.

It carries out the reaction L-glutamyl-tRNA(Gln) + L-glutamine + ATP + H2O = L-glutaminyl-tRNA(Gln) + L-glutamate + ADP + phosphate + H(+). Allows the formation of correctly charged Gln-tRNA(Gln) through the transamidation of misacylated Glu-tRNA(Gln) in organisms which lack glutaminyl-tRNA synthetase. The reaction takes place in the presence of glutamine and ATP through an activated gamma-phospho-Glu-tRNA(Gln). The polypeptide is Glutamyl-tRNA(Gln) amidotransferase subunit A (Trichormus variabilis (strain ATCC 29413 / PCC 7937) (Anabaena variabilis)).